A 253-amino-acid chain; its full sequence is Phosphoribosylaminoimidazole-succinocarboxamide synthase (253 aa).

This sequence belongs to the SAICAR synthetase family.

The enzyme catalyses 5-amino-1-(5-phospho-D-ribosyl)imidazole-4-carboxylate + L-aspartate + ATP = (2S)-2-[5-amino-1-(5-phospho-beta-D-ribosyl)imidazole-4-carboxamido]succinate + ADP + phosphate + 2 H(+). The protein operates within purine metabolism; IMP biosynthesis via de novo pathway; 5-amino-1-(5-phospho-D-ribosyl)imidazole-4-carboxamide from 5-amino-1-(5-phospho-D-ribosyl)imidazole-4-carboxylate: step 1/2. The protein is Phosphoribosylaminoimidazole-succinocarboxamide synthase of Parvibaculum lavamentivorans (strain DS-1 / DSM 13023 / NCIMB 13966).